The primary structure comprises 281 residues: uncharacterized protein (281 aa).

A disordered region spans residues 11–30 (PLGHKKEKPPPVSPPSPPPI). The segment covering 20-30 (PPVSPPSPPPI) has biased composition (pro residues). 7 helical membrane passes run 58 to 78 (TVVF…LIPW), 88 to 107 (TLPF…AYWL), 117 to 137 (MLVM…GLCF), 145 to 165 (AYVL…LMAW), 171 to 191 (LAIL…IAVQ), 196 to 216 (YQRI…IVLI), and 248 to 268 (VIMF…PNYA).

The protein belongs to the cytomegalovirus US12 family.

The protein localises to the membrane. This is an uncharacterized protein from Human cytomegalovirus (strain AD169) (HHV-5).